The following is a 184-amino-acid chain: ATP-dependent protease subunit HslV (184 aa).

Residue Thr12 is part of the active site. The Na(+) site is built by Ala166, Cys169, and Thr172.

Belongs to the peptidase T1B family. HslV subfamily. As to quaternary structure, a double ring-shaped homohexamer of HslV is capped on each side by a ring-shaped HslU homohexamer. The assembly of the HslU/HslV complex is dependent on binding of ATP.

It is found in the cytoplasm. It catalyses the reaction ATP-dependent cleavage of peptide bonds with broad specificity.. With respect to regulation, allosterically activated by HslU binding. Functionally, protease subunit of a proteasome-like degradation complex believed to be a general protein degrading machinery. This Brucella anthropi (strain ATCC 49188 / DSM 6882 / CCUG 24695 / JCM 21032 / LMG 3331 / NBRC 15819 / NCTC 12168 / Alc 37) (Ochrobactrum anthropi) protein is ATP-dependent protease subunit HslV.